A 590-amino-acid polypeptide reads, in one-letter code: Putative laccase-19 (590 aa).

The first 28 residues, 1–28, serve as a signal peptide directing secretion; the sequence is MEKLSMVTSLLCAITVAVLAVAVVSGEA. Plastocyanin-like domains lie at 36–152 and 161–315; these read VVHE…PRDG and KDVP…YAGA. Asn41 and Asn47 each carry an N-linked (GlcNAc...) asparagine glycan. 2 residues coordinate Cu cation: His86 and His88. Asn120 carries an N-linked (GlcNAc...) asparagine glycan. His131 and His133 together coordinate Cu cation. N-linked (GlcNAc...) asparagine glycans are attached at residues Asn205, Asn344, Asn378, Asn397, Asn434, and Asn465. In terms of domain architecture, Plastocyanin-like 3 spans 424–566; it reads DFPIRPPRPF…ATAFIVEDGP (143 aa). 8 residues coordinate Cu cation: Asn483, His486, His488, His545, Cys546, His547, His551, and Met556. The interval 565-590 is disordered; it reads GPTPETSLPPPPPEFKRCGNNGLSQP.

The protein belongs to the multicopper oxidase family. It depends on Cu cation as a cofactor.

The protein localises to the secreted. Its subcellular location is the extracellular space. It is found in the apoplast. The catalysed reaction is 4 hydroquinone + O2 = 4 benzosemiquinone + 2 H2O. In terms of biological role, lignin degradation and detoxification of lignin-derived products. This Oryza sativa subsp. indica (Rice) protein is Putative laccase-19 (LAC19).